A 337-amino-acid chain; its full sequence is Trace amine-associated receptor 5 (337 aa).

Residues Met-1–Tyr-38 lie on the Extracellular side of the membrane. A glycan (N-linked (GlcNAc...) asparagine) is linked at Asn-21. Cystine bridges form between Cys-24–Cys-188 and Cys-99–Cys-192. The chain crosses the membrane as a helical span at residues Leu-39–Val-59. At Ser-60 to Asn-70 the chain is on the cytoplasmic side. A helical membrane pass occupies residues Phe-71 to Ser-91. At Thr-92 to Leu-109 the chain is on the extracellular side. Residues His-110–Ile-130 traverse the membrane as a helical segment. The Cytoplasmic segment spans residues Asp-131 to Tyr-154. The chain crosses the membrane as a helical span at residues Ile-155–Val-175. The segment at Glu-176–Val-189 is extracellular Loop 2 (ECL2). The Extracellular segment spans residues Glu-176–Asn-204. Residues Phe-205 to Val-225 form a helical membrane-spanning segment. Residues Ala-226 to Thr-253 are Cytoplasmic-facing. Residues Leu-254–Val-274 form a helical membrane-spanning segment. Residues Asp-275 to Pro-284 are Extracellular-facing. A helical membrane pass occupies residues Leu-285–Phe-307. At Ser-308–Asp-337 the chain is on the cytoplasmic side.

This sequence belongs to the G-protein coupled receptor 1 family.

It localises to the cell membrane. Functionally, olfactory receptor specific for trimethylamine, a trace amine enriched in the urine of male rats, playing a role in social behavior. Also activated by N-methylpiperidine. Trimethylamine is present at high concentration in the urine of male after puberty and acts as an attractant. Trimethylamine-binding causes a conformation change that triggers signaling via G(s)-class of G alpha proteins (GNAL or GNAS). Also required to provide olfactory input into limbic brain areas to regulate emotional behaviors likely via modulation of the serotonin system. The chain is Trace amine-associated receptor 5 from Rattus norvegicus (Rat).